We begin with the raw amino-acid sequence, 317 residues long: tRNA-cytidine(32) 2-sulfurtransferase (317 aa).

Positions 46-51 match the PP-loop motif motif; sequence SGGKDS. C121, C124, and C212 together coordinate [4Fe-4S] cluster.

This sequence belongs to the TtcA family. Homodimer. Requires Mg(2+) as cofactor. The cofactor is [4Fe-4S] cluster.

It localises to the cytoplasm. It carries out the reaction cytidine(32) in tRNA + S-sulfanyl-L-cysteinyl-[cysteine desulfurase] + AH2 + ATP = 2-thiocytidine(32) in tRNA + L-cysteinyl-[cysteine desulfurase] + A + AMP + diphosphate + H(+). It participates in tRNA modification. Catalyzes the ATP-dependent 2-thiolation of cytidine in position 32 of tRNA, to form 2-thiocytidine (s(2)C32). The sulfur atoms are provided by the cysteine/cysteine desulfurase (IscS) system. This Shewanella loihica (strain ATCC BAA-1088 / PV-4) protein is tRNA-cytidine(32) 2-sulfurtransferase.